The chain runs to 121 residues: Insulin-like peptide 01 (121 aa).

An N-terminal signal peptide occupies residues 1–24; it reads MDSFTRASLITFLILLTLTSLVFS. Residues 25–45 constitute a propeptide that is removed on maturation; it reads NGCMMRGGCFKTSEDAHRLIM. Intrachain disulfides connect Cys52/Cys107, Cys64/Cys120, and Cys106/Cys111. The propeptide at 69–97 is c peptide; sequence RRRKRDLRRKLGIVMDRKESHKFLRRRKR.

This sequence belongs to the insulin family.

The protein localises to the secreted. In terms of biological role, insulin decreases blood glucose concentration. May have evolved to activate insulin receptors (INSR) in vertebrates. Molecular docking studies reveals unique interaction with the human insulin receptor. In vivo, insulin-like peptide injection reduces blood glucose levels in two models of zebrafish diabetes (streptozotocin- and glucose-induced). Also shorter swimming distance of zebrafish larvae, an effect which is not observed with human insulin. In Exaiptasia diaphana (Tropical sea anemone), this protein is Insulin-like peptide 01.